Consider the following 183-residue polypeptide: CASP-like protein UU1 (183 aa).

Residues 1–33 (MEESQQQSTKFDAPPSPYVPSRVYLAQIYWKKP) lie on the Cytoplasmic side of the membrane. Residues 34-54 (AIVVLRVLQFVFSLIAFSVMA) traverse the membrane as a helical segment. Over 55 to 72 (DLLHDVQGSIKSLSYTVA) the chain is Extracellular. A helical membrane pass occupies residues 73–93 (IGVLACAYALAQLSFSLWCVI). The Cytoplasmic portion of the chain corresponds to 94–118 (RGATSSSGVTPLYQYATFICDQMST). A helical membrane pass occupies residues 119–139 (YFLISAASATATLIDVSGVCG). Residues 140-156 (SNGSGTNLCSRSTASVT) are Extracellular-facing. N-linked (GlcNAc...) asparagine glycosylation is present at N141. A helical membrane pass occupies residues 157-177 (FAFLAFLAFSASSVLTGYYLV). Topologically, residues 178-183 (KCILKA) are cytoplasmic.

The protein belongs to the Casparian strip membrane proteins (CASP) family. Homodimer and heterodimers.

The protein resides in the cell membrane. In Selaginella moellendorffii (Spikemoss), this protein is CASP-like protein UU1.